Reading from the N-terminus, the 2545-residue chain is Methylphloroacetophenone synthase (2545 aa).

Positions 8–261 (AFGALAPWPA…HVAIHEGIPQ (254 aa)) are N-terminal acylcarrier protein transacylase (SAT) domain. The 416-residue stretch at 383–798 (KDAIAIIGMG…GSNAAMIVLE (416 aa)) folds into the Ketosynthase family 3 (KS3) domain. Catalysis depends on for beta-ketoacyl synthase activity residues C547, H682, and H721. The interval 914–1218 (LCFGGQVSDR…VSLQLNKPNS (305 aa)) is malonyl-CoA:ACP transacylase (MAT) domain. S1001 functions as the For acyl/malonyl transferase activity in the catalytic mechanism. An N-terminal hotdog fold region spans residues 1293 to 1423 (LPAVLIRLKS…GTVNLKVADD (131 aa)). The 313-residue stretch at 1293–1605 (LPAVLIRLKS…FTDIRRPVPI (313 aa)) folds into the PKS/mFAS DH domain. The interval 1296 to 1604 (VLIRLKSFDS…NFTDIRRPVP (309 aa)) is product template (PT) domain. The C-terminal hotdog fold stretch occupies residues 1449 to 1605 (RSESLRGNVL…FTDIRRPVPI (157 aa)). A Carrier domain is found at 1657–1731 (TSIYEDICGL…SLVDYLHGKG (75 aa)). S1691 is modified (O-(pantetheine 4'-phosphoryl)serine). Positions 1748–1768 (SSSHAISTGASSPPDSSGASA) are enriched in low complexity. The interval 1748 to 1773 (SSSHAISTGASSPPDSSGASAMTTPP) is disordered. Positions 1931-2163 (FGASETKLLN…GFKHVSWTDG (233 aa)) are methyltransferase (CMeT) domain. The interval 2198 to 2544 (AGVPMEEVVW…YDFICRQLGM (347 aa)) is claisen cyclase (CLC) domain. Catalysis depends on for thioesterase activity residues S2321, D2481, and H2513.

In terms of biological role, methylphloroacetophenone synthase; part of the gene cluster that mediates the biosynthesis of usnic acid, a dibenzofuran lichen product possessing a broad spectrum of biological activities. Two genes, mpas and mpao, comprise the usnic acid biosynthetic gene cluster with a single post-PKS enzyme, the methylphloracetophenone oxidase (mpao). The methylphloroacetophenone synthase (mpas) is a non-reducing polyketide synthase that produces methylphloracetophenone from acetate via a methylated tetraketide intermediate. The methylphloroacetophenone oxidase then carries out the oxidative dimerization of methylphloracetophenone to usnic acid. This is Methylphloroacetophenone synthase from Cladonia uncialis (Cup lichen).